The chain runs to 1040 residues: Alpha-mannosidase 2C1 (1040 aa).

Positions 260, 262, 372, and 577 each coordinate Co(2+). The active-site Nucleophile is the aspartate 372.

The protein belongs to the glycosyl hydrolase 38 family. Co(2+) is required as a cofactor.

The protein resides in the cytoplasm. The enzyme catalyses Hydrolysis of terminal, non-reducing alpha-D-mannose residues in alpha-D-mannosides.. Its activity is regulated as follows. Strongly inhibited by swainsonine. Also inhibited to a lesser extent by deoxymannojirimycin (DMM). Its function is as follows. Cleaves alpha 1,2-, alpha 1,3-, and alpha 1,6-linked mannose residues on cytoplasmic free oligosaccharides generated by N-glycoprotein degradation pathways. The protein is Alpha-mannosidase 2C1 (MAN2C1) of Homo sapiens (Human).